A 1329-amino-acid chain; its full sequence is MQSDSGLPPKTYSGVKFALVGFNPIHGNSLRSKLVSGGGVDVGQFTQSCTHLIVDKLLYDDPICVAARNSGKVVVTGSWVDHSFDIGMLDNANSILYRPLRDLNGIPGSKALVVCLTGYQGHDREDIMRMVELMGGQFSKPLVANRVTHLICYKFEGEKYELAKRIKRIKLVNHRWLEDCLKNWKLLPEVDYEISGYELDIMEASARDSEDEAEDASVKPANTSPLGLRVGAVPAVEISKPGGKDFPLEEGSSLCNTSKDNWLTPKRTDRPFEAMVSTDLGVAQQHNYVSPIRVANKTPEQGMSKMETDGSTSINRSIRRHSSLATYSRKTLQRSPETDTLGKESSGQNRSLRMDDKGLKASSAFNTSASKSGSSMERTSLFRDLGKIDMLHGEEFPPMMPQAKFTDGSVSRKDSLRVHHNSEASIPPPSSLLLQELRPSSPNDNLRPVMSISDPTESEEAGHKSPTSELNTKLLSSNVVPMVDALSTAENIISNCAWDEIPEKSLTERMTENVLLQEQRSGSPKQNLSVVPNLREAAHELDLSDSAARLFNSGVVPMEADIRTPENSTMKGALDEVPERSVTDPVMRRSSTSPGSGLIRMKDKQETELTTKKTAPKKSLGTRGRKKNPINQKGSIYLSEPSPTDERNVCLNKGKVSAPVTGNSNQKEISSPVLNTEVVQDMAKHIDTETEALQGIDSVDNKSLAPEEKDHLVLDLMVNQDKLQAKTPEAADAEVEITVLERELNDVPTEDPSDGALQSEVDKNTSKRKREAGVGKNSLQRGKKGSSFTAKVGKSRVKKTKISRKENDIKANGTLMKDGGDNSADGKENLALEHENGKVSSGGDQSLVAGETLTRKEAATKDPSYAAAQLEVDTKKGKRRKQATVEENRLQTPSVKKAKVSKKEDGAKANNTVKKDIWIHSAEVKENVAVDENCGDVSSDGAQSLVVEKSLAKKEAAAKDPSNAAMQLEFDDNKCKHGKEGIVERSSLQSGKKGSSSRVEVGKSSVKKTKKSEKGSGTEATDTVMKDVGDNSAKEKENIAVDNESRKVGSGGDQSPVARKKVAKSAKTGTKAEKESKQLRVNPLASRKVFQDQEHEPKFFIVSGPRSQRNEYQQIIRRLKGKCCRDSHQWSYQATHFIAPEIRRTEKFFAAAASGSWILKTDYVADSKEAGKLLQEEPYEWHSSGLSADGAINLESPKKWRLVREKTGHGALYGLRIVVYGDCTIPCLDTLKRAVKAGDGTILATAPPYTRFLNQNTDFALISPGMPRDDVWIQEFIRHEIPCVLSDYLVEYVCKPGYALDKHVLYNTNSWAEKSFNKMQLRADLCVYH.

2 BRCT domains span residues 7 to 97 (LPPK…SILY) and 104 to 194 (NGIP…DYEI). Disordered stretches follow at residues 295–378 (ANKT…SMER), 393–470 (GEEF…TSEL), 576–645 (EVPE…SPTD), 745–827 (NDVP…ADGK), and 952–1077 (AKKE…KESK). Polar residues-rich tracts occupy residues 323–335 (SLATYSRKTLQRS) and 363–378 (SAFNTSASKSGSSMER). Composition is skewed to basic and acidic residues over residues 410–422 (VSRKDSLRVHHNS) and 600–611 (RMKDKQETELTT). Residues 793–802 (GKSRVKKTKI) are compositionally biased toward basic residues. Composition is skewed to basic and acidic residues over residues 818–827 (DGGDNSADGK) and 971–983 (DDNKCKHGKEGIV). A compositionally biased stretch (low complexity) spans 986-1004 (SSLQSGKKGSSSRVEVGKS). Basic and acidic residues predominate over residues 1024-1047 (VMKDVGDNSAKEKENIAVDNESRK). Residues 1090–1181 (FQDQEHEPKF…KLLQEEPYEW (92 aa)) enclose the BRCT 3 domain.

The sequence is that of BRCT domain-containing protein At4g02110 from Arabidopsis thaliana (Mouse-ear cress).